Here is a 575-residue protein sequence, read N- to C-terminus: Adenine deaminase 1 (575 aa).

Belongs to the metallo-dependent hydrolases superfamily. Adenine deaminase family. Mn(2+) serves as cofactor.

It catalyses the reaction adenine + H2O + H(+) = hypoxanthine + NH4(+). This chain is Adenine deaminase 1, found in Agrobacterium fabrum (strain C58 / ATCC 33970) (Agrobacterium tumefaciens (strain C58)).